Consider the following 207-residue polypeptide: Probable nicotinate-nucleotide adenylyltransferase (207 aa).

Belongs to the NadD family.

The catalysed reaction is nicotinate beta-D-ribonucleotide + ATP + H(+) = deamido-NAD(+) + diphosphate. It functions in the pathway cofactor biosynthesis; NAD(+) biosynthesis; deamido-NAD(+) from nicotinate D-ribonucleotide: step 1/1. Its function is as follows. Catalyzes the reversible adenylation of nicotinate mononucleotide (NaMN) to nicotinic acid adenine dinucleotide (NaAD). The polypeptide is Probable nicotinate-nucleotide adenylyltransferase (Synechococcus sp. (strain JA-3-3Ab) (Cyanobacteria bacterium Yellowstone A-Prime)).